The primary structure comprises 534 residues: CTP synthase (534 aa).

The amidoligase domain stretch occupies residues 1–267 (MTKYIFVTGG…DQIVCDHLKL (267 aa)). Serine 13 serves as a coordination point for CTP. Position 13 (serine 13) interacts with UTP. 14–19 (SIGKGI) provides a ligand contact to ATP. L-glutamine is bound at residue tyrosine 54. Aspartate 71 is an ATP binding site. Positions 71 and 141 each coordinate Mg(2+). CTP-binding positions include 148–150 (DIE), 188–193 (KTKPTQ), and lysine 224. Residues 188-193 (KTKPTQ) and lysine 224 contribute to the UTP site. ATP is bound at residue 240–242 (RDV). Positions 292–534 (KIALVGKYVE…FVTAAIKNSN (243 aa)) constitute a Glutamine amidotransferase type-1 domain. Glycine 354 provides a ligand contact to L-glutamine. Residue cysteine 381 is the Nucleophile; for glutamine hydrolysis of the active site. L-glutamine-binding positions include 382 to 385 (LGMQ), glutamate 405, and arginine 463. Residues histidine 508 and glutamate 510 contribute to the active site.

The protein belongs to the CTP synthase family. As to quaternary structure, homotetramer.

It catalyses the reaction UTP + L-glutamine + ATP + H2O = CTP + L-glutamate + ADP + phosphate + 2 H(+). The catalysed reaction is L-glutamine + H2O = L-glutamate + NH4(+). The enzyme catalyses UTP + NH4(+) + ATP = CTP + ADP + phosphate + 2 H(+). The protein operates within pyrimidine metabolism; CTP biosynthesis via de novo pathway; CTP from UDP: step 2/2. Its activity is regulated as follows. Allosterically activated by GTP, when glutamine is the substrate; GTP has no effect on the reaction when ammonia is the substrate. The allosteric effector GTP functions by stabilizing the protein conformation that binds the tetrahedral intermediate(s) formed during glutamine hydrolysis. Inhibited by the product CTP, via allosteric rather than competitive inhibition. Its function is as follows. Catalyzes the ATP-dependent amination of UTP to CTP with either L-glutamine or ammonia as the source of nitrogen. Regulates intracellular CTP levels through interactions with the four ribonucleotide triphosphates. The chain is CTP synthase from Streptococcus pyogenes serotype M2 (strain MGAS10270).